A 349-amino-acid chain; its full sequence is Protein RecA (349 aa).

65–72 (GPESSGKT) is a binding site for ATP.

The protein belongs to the RecA family.

It localises to the cytoplasm. Can catalyze the hydrolysis of ATP in the presence of single-stranded DNA, the ATP-dependent uptake of single-stranded DNA by duplex DNA, and the ATP-dependent hybridization of homologous single-stranded DNAs. It interacts with LexA causing its activation and leading to its autocatalytic cleavage. The chain is Protein RecA from Enterococcus faecium (Streptococcus faecium).